A 109-amino-acid polypeptide reads, in one-letter code: Sperm-specific class P protein 9/11 (109 aa).

Residues 2 to 109 (SLTADPPACT…TVTIPMSATA (108 aa)) enclose the MSP domain.

As to expression, expressed at higher level in testis.

This Caenorhabditis elegans protein is Sperm-specific class P protein 9/11 (ssp-9).